The following is a 340-amino-acid chain: Methionine import ATP-binding protein MetN (340 aa).

One can recognise an ABC transporter domain in the interval 6–245; that stretch reads IEFEGITKVF…PQTNVAKRFV (240 aa). 42 to 49 lines the ATP pocket; sequence GYSGAGKS.

Belongs to the ABC transporter superfamily. Methionine importer (TC 3.A.1.24) family. As to quaternary structure, the complex is composed of two ATP-binding proteins (MetN), two transmembrane proteins (MetI) and a solute-binding protein (MetQ).

The protein localises to the cell membrane. It catalyses the reaction L-methionine(out) + ATP + H2O = L-methionine(in) + ADP + phosphate + H(+). It carries out the reaction D-methionine(out) + ATP + H2O = D-methionine(in) + ADP + phosphate + H(+). Part of the ABC transporter complex MetNIQ involved in methionine import. Responsible for energy coupling to the transport system. This Corynebacterium diphtheriae (strain ATCC 700971 / NCTC 13129 / Biotype gravis) protein is Methionine import ATP-binding protein MetN.